The sequence spans 225 residues: Protein GrpE (225 aa).

Polar residues predominate over residues 1–15; that stretch reads MSGDASTPEQDQNVV. Disordered stretches follow at residues 1-48 and 198-225; these read MSGD…DRMQ and VSMG…AEEA. The span at 201-225 shows a compositional bias: low complexity; that stretch reads GPGPSDPGSAPAEAAAAPDQTAEEA.

This sequence belongs to the GrpE family. As to quaternary structure, homodimer.

It localises to the cytoplasm. Its function is as follows. Participates actively in the response to hyperosmotic and heat shock by preventing the aggregation of stress-denatured proteins, in association with DnaK and GrpE. It is the nucleotide exchange factor for DnaK and may function as a thermosensor. Unfolded proteins bind initially to DnaJ; upon interaction with the DnaJ-bound protein, DnaK hydrolyzes its bound ATP, resulting in the formation of a stable complex. GrpE releases ADP from DnaK; ATP binding to DnaK triggers the release of the substrate protein, thus completing the reaction cycle. Several rounds of ATP-dependent interactions between DnaJ, DnaK and GrpE are required for fully efficient folding. In Synechococcus sp. (strain CC9605), this protein is Protein GrpE.